The primary structure comprises 444 residues: Exodeoxyribonuclease 7 large subunit (444 aa).

This sequence belongs to the XseA family. Heterooligomer composed of large and small subunits.

The protein localises to the cytoplasm. The catalysed reaction is Exonucleolytic cleavage in either 5'- to 3'- or 3'- to 5'-direction to yield nucleoside 5'-phosphates.. In terms of biological role, bidirectionally degrades single-stranded DNA into large acid-insoluble oligonucleotides, which are then degraded further into small acid-soluble oligonucleotides. The chain is Exodeoxyribonuclease 7 large subunit from Rickettsia akari (strain Hartford).